The sequence spans 263 residues: Hydroxyacylglutathione hydrolase (263 aa).

Zn(2+) contacts are provided by His56, His58, Asp60, His61, His115, Asp135, and His175.

It belongs to the metallo-beta-lactamase superfamily. Glyoxalase II family. As to quaternary structure, monomer. Requires Zn(2+) as cofactor.

The enzyme catalyses an S-(2-hydroxyacyl)glutathione + H2O = a 2-hydroxy carboxylate + glutathione + H(+). The protein operates within secondary metabolite metabolism; methylglyoxal degradation; (R)-lactate from methylglyoxal: step 2/2. Thiolesterase that catalyzes the hydrolysis of S-D-lactoyl-glutathione to form glutathione and D-lactic acid. In Nitrosococcus oceani (strain ATCC 19707 / BCRC 17464 / JCM 30415 / NCIMB 11848 / C-107), this protein is Hydroxyacylglutathione hydrolase.